A 161-amino-acid polypeptide reads, in one-letter code: Protein translocase subunit SecE (161 aa).

Residues 1-12 (MSDEGDVADEAV) show a composition bias toward acidic residues. Residues 1-80 (MSDEGDVADE…GVAKDDSTTK (80 aa)) form a disordered region. A helical transmembrane segment spans residues 133–153 (VVLAFLAFMVALVAGADLGLT).

Belongs to the SecE/SEC61-gamma family. In terms of assembly, component of the Sec protein translocase complex. Heterotrimer consisting of SecY, SecE and SecG subunits. The heterotrimers can form oligomers, although 1 heterotrimer is thought to be able to translocate proteins. Interacts with the ribosome. Interacts with SecDF, and other proteins may be involved. Interacts with SecA.

The protein localises to the cell membrane. In terms of biological role, essential subunit of the Sec protein translocation channel SecYEG. Clamps together the 2 halves of SecY. May contact the channel plug during translocation. In Mycobacterium bovis (strain ATCC BAA-935 / AF2122/97), this protein is Protein translocase subunit SecE.